The chain runs to 295 residues: Cyclic dipyrimidine nucleotide synthase CdnE (295 aa).

Residues 1–28 (MAKYTEDQLTSWTKPPSDSEQTKLENSE) form a disordered region. The segment covering 7–19 (DQLTSWTKPPSDS) has biased composition (polar residues). 2 residues coordinate UTP: Q51 and S53. Position 67 (D67) interacts with Mg(2+). Residues K123, N169, R197, F217, and K276 each coordinate UTP. Residues 275–277 (RKW) carry the Pyrimidine specificity motif (R/Q)xW in donor pocket motif.

It belongs to the CD-NTase family. E02 subfamily. As to quaternary structure, monomer. Mg(2+) is required as a cofactor.

It catalyses the reaction 2 UTP = c-di-UMP + 2 diphosphate. The catalysed reaction is UTP + CTP = cyclic CMP-UMP + 2 diphosphate. Functionally, cyclic nucleotide synthase (second messenger synthase) of a CBASS antivirus system. CBASS (cyclic oligonucleotide-based antiphage signaling system) provides immunity against bacteriophage. The CD-NTase protein synthesizes cyclic nucleotides in response to infection; these serve as specific second messenger signals. The signals activate a diverse range of effectors, leading to bacterial cell death and thus abortive phage infection. A type I-B(UU) CBASS system. This chain is Cyclic dipyrimidine nucleotide synthase CdnE, found in Cecembia lonarensis (strain CCUG 58316 / KCTC 22772 / LW9).